We begin with the raw amino-acid sequence, 1158 residues long: ATP-dependent helicase/deoxyribonuclease subunit B (1158 aa).

8 to 15 contacts ATP; it reads GRAGTGKS. Residues C791, C1112, C1115, and C1121 each coordinate [4Fe-4S] cluster.

Belongs to the helicase family. AddB/RexB type 1 subfamily. In terms of assembly, heterodimer of AddA and AddB. Requires Mg(2+) as cofactor. The cofactor is [4Fe-4S] cluster.

Functionally, the heterodimer acts as both an ATP-dependent DNA helicase and an ATP-dependent, dual-direction single-stranded exonuclease. Recognizes the chi site generating a DNA molecule suitable for the initiation of homologous recombination. The AddB subunit has 5' -&gt; 3' nuclease activity but not helicase activity. The polypeptide is ATP-dependent helicase/deoxyribonuclease subunit B (Clostridium perfringens (strain ATCC 13124 / DSM 756 / JCM 1290 / NCIMB 6125 / NCTC 8237 / Type A)).